A 477-amino-acid polypeptide reads, in one-letter code: ATP synthase subunit beta (477 aa).

ATP is bound at residue Gly155–Thr162.

The protein belongs to the ATPase alpha/beta chains family. F-type ATPases have 2 components, CF(1) - the catalytic core - and CF(0) - the membrane proton channel. CF(1) has five subunits: alpha(3), beta(3), gamma(1), delta(1), epsilon(1). CF(0) has three main subunits: a(1), b(2) and c(9-12). The alpha and beta chains form an alternating ring which encloses part of the gamma chain. CF(1) is attached to CF(0) by a central stalk formed by the gamma and epsilon chains, while a peripheral stalk is formed by the delta and b chains.

It localises to the cell inner membrane. The enzyme catalyses ATP + H2O + 4 H(+)(in) = ADP + phosphate + 5 H(+)(out). Produces ATP from ADP in the presence of a proton gradient across the membrane. The catalytic sites are hosted primarily by the beta subunits. This is ATP synthase subunit beta from Mesorhizobium japonicum (strain LMG 29417 / CECT 9101 / MAFF 303099) (Mesorhizobium loti (strain MAFF 303099)).